A 362-amino-acid polypeptide reads, in one-letter code: Alanine racemase (362 aa).

The Proton acceptor; specific for D-alanine role is filled by K35. Position 35 is an N6-(pyridoxal phosphate)lysine (K35). R130 is a substrate binding site. Residue Y257 is the Proton acceptor; specific for L-alanine of the active site. Position 305 (M305) interacts with substrate.

Belongs to the alanine racemase family. The cofactor is pyridoxal 5'-phosphate.

The catalysed reaction is L-alanine = D-alanine. The protein operates within amino-acid biosynthesis; D-alanine biosynthesis; D-alanine from L-alanine: step 1/1. Its function is as follows. Catalyzes the interconversion of L-alanine and D-alanine. May also act on other amino acids. The protein is Alanine racemase (alr) of Nitrosomonas europaea (strain ATCC 19718 / CIP 103999 / KCTC 2705 / NBRC 14298).